We begin with the raw amino-acid sequence, 79 residues long: MASDRQNLQDAFLNHVRKTKVPVTIFLINGVKLQGVITWFDNFCVLLRRDGQSQLVYKHAISTIMPAQPISLYEGEDAN.

The Sm domain maps to 10–70 (DAFLNHVRKT…ISTIMPAQPI (61 aa)).

It belongs to the Hfq family. Homohexamer.

Its function is as follows. RNA chaperone that binds small regulatory RNA (sRNAs) and mRNAs to facilitate mRNA translational regulation in response to envelope stress, environmental stress and changes in metabolite concentrations. Also binds with high specificity to tRNAs. This is RNA-binding protein Hfq from Ruegeria pomeroyi (strain ATCC 700808 / DSM 15171 / DSS-3) (Silicibacter pomeroyi).